The chain runs to 215 residues: High frequency lysogenization protein HflD homolog (215 aa).

The protein belongs to the HflD family.

It localises to the cytoplasm. The protein resides in the cell inner membrane. The protein is High frequency lysogenization protein HflD homolog of Haemophilus ducreyi (strain 35000HP / ATCC 700724).